Here is a 631-residue protein sequence, read N- to C-terminus: Phosphomethylpyrimidine synthase (631 aa).

Residues Asn-239, Met-268, Tyr-297, His-333, 353–355, 394–397, and Glu-433 each bind substrate; these read SRG and DGLR. Residue His-437 participates in Zn(2+) binding. Tyr-460 provides a ligand contact to substrate. His-501 contributes to the Zn(2+) binding site. Residues Cys-581, Cys-584, and Cys-589 each coordinate [4Fe-4S] cluster.

It belongs to the ThiC family. Homodimer. [4Fe-4S] cluster serves as cofactor.

It carries out the reaction 5-amino-1-(5-phospho-beta-D-ribosyl)imidazole + S-adenosyl-L-methionine = 4-amino-2-methyl-5-(phosphooxymethyl)pyrimidine + CO + 5'-deoxyadenosine + formate + L-methionine + 3 H(+). The protein operates within cofactor biosynthesis; thiamine diphosphate biosynthesis. Functionally, catalyzes the synthesis of the hydroxymethylpyrimidine phosphate (HMP-P) moiety of thiamine from aminoimidazole ribotide (AIR) in a radical S-adenosyl-L-methionine (SAM)-dependent reaction. The polypeptide is Phosphomethylpyrimidine synthase (Escherichia coli O81 (strain ED1a)).